Consider the following 123-residue polypeptide: Large ribosomal subunit protein uL14 (123 aa).

The protein belongs to the universal ribosomal protein uL14 family. Part of the 50S ribosomal subunit. Forms a cluster with proteins L3 and L19. In the 70S ribosome, L14 and L19 interact and together make contacts with the 16S rRNA in bridges B5 and B8.

In terms of biological role, binds to 23S rRNA. Forms part of two intersubunit bridges in the 70S ribosome. The polypeptide is Large ribosomal subunit protein uL14 (Wigglesworthia glossinidia brevipalpis).